The sequence spans 298 residues: uncharacterized protein (298 aa).

The next 9 membrane-spanning stretches (helical) occupy residues 10 to 30 (VIYT…WKLL), 36 to 56 (LDIL…VLFF), 76 to 96 (ILSL…YIWA), 101 to 121 (FLLE…LLGI), 142 to 162 (GVII…LLAF), 179 to 199 (AIGL…YLLF), 212 to 232 (GTWL…LLFA), 243 to 263 (VGIL…FVYH), and 271 to 291 (AFTF…QVKW). EamA domains lie at 17–148 (FIMW…ISAF) and 162–286 (FSFG…LFTF).

It belongs to the EamA transporter family.

It is found in the cell membrane. This is an uncharacterized protein from Bacillus subtilis (strain 168).